Consider the following 347-residue polypeptide: Heat-inducible transcription repressor HrcA (347 aa).

This sequence belongs to the HrcA family.

Functionally, negative regulator of class I heat shock genes (grpE-dnaK-dnaJ and groELS operons). Prevents heat-shock induction of these operons. This is Heat-inducible transcription repressor HrcA from Rhodococcus erythropolis (strain PR4 / NBRC 100887).